Reading from the N-terminus, the 464-residue chain is Protein FAM90A13 (464 aa).

Disordered regions lie at residues 1–42 (MMAR…DPRL), 69–389 (VPAT…HDGA), and 411–437 (APSF…SEAP). Composition is skewed to basic and acidic residues over residues 74-89 (GKKE…KPRG) and 97-114 (NKDK…DPQR). Low complexity predominate over residues 180–197 (LASLSPLRKASLSSSSSL).

Belongs to the FAM90 family.

The protein is Protein FAM90A13 of Homo sapiens (Human).